The primary structure comprises 237 residues: AQSLSFSFTKFDPNQEDLIFQGTATSKLDSAGNPVSSSAGRVLYSAPLRLWEDSAVLTSFDPTIYIFTNYTSRIADGLAFIAPPDSVISYHGGFLGLFPNAAESGIAESNVVAVEFDTDYLNPDYGDPNYIHIGIDVNSIRSKVTASWDWQNGKIATAHISYNSVSKRLSVTTYYPGRGKPATSYDIELHTVLPEWVRVGLSASTGQNIERNTVHSWSFTSSLWTNVAKVGVASISG.

The N-linked (GlcNAc...) asparagine glycan is linked to asparagine 69. Isoleucine 106 bears the Blocked amino end (Ile) mark. The Mn(2+) site is built by glutamate 115 and aspartate 117. Aspartate 117, tyrosine 120, asparagine 122, and aspartate 127 together coordinate Ca(2+). Mn(2+) is bound by residues aspartate 127 and histidine 132.

It belongs to the leguminous lectin family. As to quaternary structure, tetramer of two alpha and two beta chains. Post-translationally, the N-terminus of alpha chain is blocked. The alpha and beta chains are produced by proteolytic processing, with probably the loss of intervening amino acid(s).

In terms of biological role, D-mannose/D-glucose-binding lectin. Requires Ca(2+) and Mn(2+) ions for full activity. The protein is Lectin of Lablab purpureus (Hyacinth bean).